A 121-amino-acid polypeptide reads, in one-letter code: Non-structural protein 8 (121 aa).

Positions 1-15 (MKLLIVFGLLTSVYC) are cleaved as a signal peptide. Residues 19 to 121 (ECSIQECCEN…HDVRVVLDFV (103 aa)) form the SARS ORF8 Ig-like domain. 3 cysteine pairs are disulfide-bonded: Cys-25–Cys-90, Cys-37–Cys-102, and Cys-61–Cys-83.

The polypeptide is Non-structural protein 8 (Bat coronavirus Rp3/2004 (BtCoV/Rp3/2004)).